The sequence spans 195 residues: UPF0314 protein RHE_CH03951 (195 aa).

A run of 4 helical transmembrane segments spans residues 14–34 (AFWF…EYLM), 64–84 (WYTP…YLIL), 128–148 (DSIL…FFAA), and 150–170 (APVA…GYVI).

This sequence belongs to the UPF0314 family.

The protein resides in the cell membrane. The chain is UPF0314 protein RHE_CH03951 from Rhizobium etli (strain ATCC 51251 / DSM 11541 / JCM 21823 / NBRC 15573 / CFN 42).